Here is a 121-residue protein sequence, read N- to C-terminus: U15-barytoxin-Tl1b (121 aa).

Positions methionine 1–alanine 16 are cleaved as a signal peptide. Cystine bridges form between cysteine 54–cysteine 72, cysteine 65–cysteine 78, cysteine 69–cysteine 119, and cysteine 71–cysteine 90.

It belongs to the neurotoxin 03 (Tx2) family. 03 subfamily. Expressed by the venom gland.

Its subcellular location is the secreted. Ion channel inhibitor. In Trittame loki (Brush-footed trapdoor spider), this protein is U15-barytoxin-Tl1b.